Reading from the N-terminus, the 353-residue chain is Quinolinate synthase (353 aa).

Residues H47 and S68 each coordinate iminosuccinate. C113 is a [4Fe-4S] cluster binding site. Iminosuccinate contacts are provided by residues 139-141 (YAN) and S156. C200 provides a ligand contact to [4Fe-4S] cluster. Iminosuccinate contacts are provided by residues 226 to 228 (HPE) and T243. C297 contacts [4Fe-4S] cluster.

This sequence belongs to the quinolinate synthase family. Type 1 subfamily. [4Fe-4S] cluster is required as a cofactor.

Its subcellular location is the cytoplasm. The catalysed reaction is iminosuccinate + dihydroxyacetone phosphate = quinolinate + phosphate + 2 H2O + H(+). It participates in cofactor biosynthesis; NAD(+) biosynthesis; quinolinate from iminoaspartate: step 1/1. Its function is as follows. Catalyzes the condensation of iminoaspartate with dihydroxyacetone phosphate to form quinolinate. The protein is Quinolinate synthase of Vibrio cholerae serotype O1 (strain ATCC 39541 / Classical Ogawa 395 / O395).